Reading from the N-terminus, the 86-residue chain is Omega-theraphotoxin-Hhn1b (86 aa).

An N-terminal signal peptide occupies residues 1 to 21 (MKSIVFVALFGLALLAVVCSA). A propeptide spanning residues 22-50 (SEDAHKELLKEVVRAMVVDKTDAVQAEER) is cleaved from the precursor. 3 cysteine pairs are disulfide-bonded: C52–C66, C59–C71, and C65–C78.

It belongs to the neurotoxin 10 (Hwtx-1) family. 17 (Hntx-9) subfamily. Expressed by the venom gland.

It localises to the secreted. Functionally, ion channel inhibitor. This Cyriopagopus hainanus (Chinese bird spider) protein is Omega-theraphotoxin-Hhn1b.